The primary structure comprises 1734 residues: Gag-Pol polyprotein (1734 aa).

Gly2 carries N-myristoyl glycine; by host lipidation. Residues Pro107–Arg217 are disordered. The short motif at Pro109 to Pro112 is the PTAP/PSAP motif element. Residues Leu128–Leu132 carry the LYPX(n)L motif motif. A PPXY motif motif is present at residues Pro161–Tyr164. Ser191 bears the Phosphoserine; by host mark. The tract at residues Gly344–Val392 is interaction with host PIAS4. The interval Ile429 to Glu434 is interaction with host UBE2I. Composition is skewed to basic and acidic residues over residues Glu434–Arg465 and Arg485–Leu498. Disordered regions lie at residues Glu434 to Leu498 and Trp512 to Thr552. Residues Glu437–Ala478 are a coiled coil. The CCHC-type zinc finger occupies Asp501–Lys518. The Peptidase A2 domain occupies Val560 to Leu630. Asp565 acts as the Protease; shared with dimeric partner in catalysis. The region spanning Leu740 to Leu931 is the Reverse transcriptase domain. Residues Asp808, Asp882, Asp883, Asp1182, Glu1220, Asp1241, and Asp1311 each coordinate Mg(2+). The region spanning Pro1173–Ile1319 is the RNase H type-1 domain. An HHCC-type zinc finger spans residues His1386–Cys1426. Positions Arg1443–Pro1601 constitute an Integrase catalytic domain. Residues Asp1454 and Asp1513 each contribute to the Mg(2+) site.

The protein belongs to the retroviral Pol polyprotein family. As to quaternary structure, homohexamer; further associates as homomultimer. The virus core is composed of a lattice formed from hexagonal rings, each containing six capsid monomers. In terms of assembly, interacts (via PPXY motif) with host NEDD4. Interacts (via PSAP motif) with host TSG101. Interacts (via LYPX(n)L motif) with host PDCD6IP. The reverse transcriptase is a monomer (Potential). Interacts (via RNase domains) with host release factor ETF1; this interaction is essential for translational readthrough of amber codon between viral gag and pol genes, as well as for viral replication. As to quaternary structure, homodimer. Mg(2+) serves as cofactor. In terms of processing, ubiquitinated by ITCH. Gag can recruit the ubiquitin ligase Itch in an L domain-independent manner to facilitate virus release via a mechanism that involves Gag ubiquitination. Specific enzymatic cleavages by the viral protease yield mature proteins. The protease is released by autocatalytic cleavage. The polyprotein is cleaved during and after budding, this process is termed maturation. Post-translationally, sumoylated; which is required for virus replication. In terms of processing, phosphorylated on serine residues.

It is found in the virion. The protein localises to the host cell membrane. The protein resides in the host late endosome membrane. Its subcellular location is the host endosome. It localises to the host multivesicular body. It is found in the host cytoplasm. The catalysed reaction is DNA(n) + a 2'-deoxyribonucleoside 5'-triphosphate = DNA(n+1) + diphosphate. It carries out the reaction Endonucleolytic cleavage to 5'-phosphomonoester.. With respect to regulation, most efficiently inhibited by Amprenavir, which is able to block Gag-Pol processing in infected cells. Functionally, plays a role in budding and is processed by the viral protease during virion maturation outside the cell. During budding, it recruits, in a PPXY-dependent or independent manner, Nedd4-like ubiquitin ligases that conjugate ubiquitin molecules to Gag-Pol, or to Gag-Pol binding host factors. Interaction with HECT ubiquitin ligases probably link the viral protein to the host ESCRT pathway and facilitates release. In terms of biological role, targets Gag and gag-pol polyproteins to the plasma membrane via a multipartite membrane binding signal, that includes its myristoylated N-terminus. Also mediates nuclear localization of the pre-integration complex. Its function is as follows. Constituent of the pre-integration complex (PIC) which tethers the latter to mitotic chromosomes. This allows the integration of the viral genome into the host DNA. Forms the spherical core of the virion that encapsulates the genomic RNA-nucleocapsid complex. Functionally, involved in the packaging and encapsidation of two copies of the genome. Binds with high affinity to conserved UCUG elements within the packaging signal, located near the 5'-end of the genome. This binding is dependent on genome dimerization. Acts as a nucleic acid chaperone which is involved in rearrangement of nucleic acid secondary structures during gRNA retrotranscription. In terms of biological role, the aspartyl protease mediates proteolytic cleavages of Gag and Gag-Pol polyproteins during or shortly after the release of the virion from the plasma membrane. Cleavages take place as an ordered, step-wise cascade to yield mature proteins. This process is called maturation. Displays maximal activity during the budding process just prior to particle release from the cell (Potential). Cleaves the translation initiation factor eIF4G leading to the inhibition of host cap-dependent translation. Its function is as follows. RT is a multifunctional enzyme that converts the viral dimeric RNA genome into dsDNA in the cytoplasm, shortly after virus entry into the cell. This enzyme displays a DNA polymerase activity that can copy either DNA or RNA templates, and a ribonuclease H (RNase H) activity that cleaves the RNA strand of RNA-DNA heteroduplexes in a partially processive 3' to 5' endonucleasic mode. Conversion of viral genomic RNA into dsDNA requires many steps. A tRNA binds to the primer-binding site (PBS) situated at the 5' end of the viral RNA. RT uses the 3' end of the tRNA primer to perform a short round of RNA-dependent minus-strand DNA synthesis. The reading proceeds through the U5 region and ends after the repeated (R) region which is present at both ends of viral RNA. The portion of the RNA-DNA heteroduplex is digested by the RNase H, resulting in a ssDNA product attached to the tRNA primer. This ssDNA/tRNA hybridizes with the identical R region situated at the 3' end of viral RNA. This template exchange, known as minus-strand DNA strong stop transfer, can be either intra- or intermolecular. RT uses the 3' end of this newly synthesized short ssDNA to perform the RNA-dependent minus-strand DNA synthesis of the whole template. RNase H digests the RNA template except for a polypurine tract (PPT) situated at the 5' end of the genome. It is not clear if both polymerase and RNase H activities are simultaneous. RNase H probably can proceed both in a polymerase-dependent (RNA cut into small fragments by the same RT performing DNA synthesis) and a polymerase-independent mode (cleavage of remaining RNA fragments by free RTs). Secondly, RT performs DNA-directed plus-strand DNA synthesis using the PPT that has not been removed by RNase H as primers. PPT and tRNA primers are then removed by RNase H. The 3' and 5' ssDNA PBS regions hybridize to form a circular dsDNA intermediate. Strand displacement synthesis by RT to the PBS and PPT ends produces a blunt ended, linear dsDNA copy of the viral genome that includes long terminal repeats (LTRs) at both ends. Catalyzes viral DNA integration into the host chromosome, by performing a series of DNA cutting and joining reactions. This enzyme activity takes place after virion entry into a cell and reverse transcription of the RNA genome in dsDNA. The first step in the integration process is 3' processing. This step requires a complex comprising the viral genome, matrix protein and integrase. This complex is called the pre-integration complex (PIC). The integrase protein removes 2 nucleotides from each 3' end of the viral DNA, leaving recessed CA OH's at the 3' ends. In the second step that requires cell division, the PIC enters cell nucleus. In the third step, termed strand transfer, the integrase protein joins the previously processed 3' ends to the 5' ends of strands of target cellular DNA at the site of integration. The last step is viral DNA integration into host chromosome. The protein is Gag-Pol polyprotein (pol) of AKV murine leukemia virus (AKR (endogenous) murine leukemia virus).